We begin with the raw amino-acid sequence, 447 residues long: Phosphoglucosamine mutase (447 aa).

Serine 103 functions as the Phosphoserine intermediate in the catalytic mechanism. 4 residues coordinate Mg(2+): serine 103, aspartate 242, aspartate 244, and aspartate 246. Phosphoserine is present on serine 103.

It belongs to the phosphohexose mutase family. Mg(2+) serves as cofactor. In terms of processing, activated by phosphorylation.

It carries out the reaction alpha-D-glucosamine 1-phosphate = D-glucosamine 6-phosphate. Functionally, catalyzes the conversion of glucosamine-6-phosphate to glucosamine-1-phosphate. The sequence is that of Phosphoglucosamine mutase from Dinoroseobacter shibae (strain DSM 16493 / NCIMB 14021 / DFL 12).